The following is a 103-amino-acid chain: Small ribosomal subunit protein uS10 (103 aa).

Belongs to the universal ribosomal protein uS10 family. Part of the 30S ribosomal subunit.

Functionally, involved in the binding of tRNA to the ribosomes. This chain is Small ribosomal subunit protein uS10, found in Natranaerobius thermophilus (strain ATCC BAA-1301 / DSM 18059 / JW/NM-WN-LF).